Here is a 201-residue protein sequence, read N- to C-terminus: Large ribosomal subunit protein uL4 (201 aa).

The interval 44–71 is disordered; sequence RAQKTRAEVSGSGKKPWRQKGTGRARSG.

The protein belongs to the universal ribosomal protein uL4 family. Part of the 50S ribosomal subunit.

Functionally, one of the primary rRNA binding proteins, this protein initially binds near the 5'-end of the 23S rRNA. It is important during the early stages of 50S assembly. It makes multiple contacts with different domains of the 23S rRNA in the assembled 50S subunit and ribosome. Its function is as follows. Forms part of the polypeptide exit tunnel. The protein is Large ribosomal subunit protein uL4 of Photorhabdus laumondii subsp. laumondii (strain DSM 15139 / CIP 105565 / TT01) (Photorhabdus luminescens subsp. laumondii).